Here is a 472-residue protein sequence, read N- to C-terminus: Inhibitor of Apoptosis OPG037 (472 aa).

ANK repeat units lie at residues 97–126 (DGNY…DPNA), 130–161 (HNKT…KINN), 233–263 (DGNT…DVNK), 267–297 (FGDS…VITD), 322–351 (YDST…ICED), and 353–377 (MYYA…SVDS).

Belongs to the orthopoxvirus OPG037 protein family. May interact with host caspase-9-Apaf-1 complex.

The protein resides in the host cytoplasm. Functionally, inhibits host apoptosis. Acts by associating with host apoptosome. The chain is Inhibitor of Apoptosis OPG037 (OPG037) from Homo sapiens (Human).